The chain runs to 97 residues: Large ribosomal subunit protein bL25 (97 aa).

Belongs to the bacterial ribosomal protein bL25 family. As to quaternary structure, part of the 50S ribosomal subunit; part of the 5S rRNA/L5/L18/L25 subcomplex. Contacts the 5S rRNA. Binds to the 5S rRNA independently of L5 and L18.

Its function is as follows. This is one of the proteins that binds to the 5S RNA in the ribosome where it forms part of the central protuberance. This is Large ribosomal subunit protein bL25 from Blochmanniella pennsylvanica (strain BPEN).